A 296-amino-acid chain; its full sequence is Thymidylate synthase (296 aa).

Residues arginine 24 and 151-152 (RR) each bind dUMP. Cysteine 171 functions as the Nucleophile in the catalytic mechanism. Residues 197-200 (RSAD), asparagine 208, and 238-240 (HVY) contribute to the dUMP site. Aspartate 200 contacts (6R)-5,10-methylene-5,6,7,8-tetrahydrofolate.

Belongs to the thymidylate synthase family. In terms of assembly, homodimer.

The catalysed reaction is dUMP + (6R)-5,10-methylene-5,6,7,8-tetrahydrofolate = 7,8-dihydrofolate + dTMP. The protein operates within pyrimidine metabolism; dTTP biosynthesis. The chain is Thymidylate synthase (tms1) from Agaricus bisporus (White button mushroom).